The chain runs to 374 residues: MVKLLNSTRELSINALSMLNSFGDMVAQATGLNRKLLTTDSSDATARRLLQISNAKPNATVALDGSGQYKTIKEALDAVPKKNTEPFIIFIKAGVYKEYIDIPKSMTNVVLIGEGPTKTKITGNKSVKDGPSTFHTTTVGVNGANFVAKNIGFENTAGPEKEQAVALRVSADKAIIYNCQIDGYQDTLYVHTYRQFYRDCTITGTVDFIFGNGEAVLQNCKVIVRKPAQNQSCMVTAQGRTEPIQKGAIVLQNCEIKPDTDYFSLSPPSKTYLGRPWKEYSRTIIMQSYIDKFIEPEGWAPWNITNFGRDTSYYAEYQNRGPGAALDKRITWKGFQKGFTGEAAQKFTAGVYINNDENWLQKANVPYEAGMMKV.

Residues methionine 1 to glycine 31 form the signal peptide. Asparagine 58 and asparagine 124 each carry an N-linked (GlcNAc...) asparagine glycan. Substrate contacts are provided by threonine 133 and glutamine 163. Catalysis depends on aspartate 186, which acts as the Proton donor. The cysteines at positions 200 and 220 are disulfide-linked. Catalysis depends on aspartate 207, which acts as the Nucleophile. N-linked (GlcNAc...) asparagine glycosylation is present at asparagine 230. Substrate-binding residues include arginine 275 and tryptophan 277. N-linked (GlcNAc...) asparagine glycosylation is present at asparagine 303.

This sequence belongs to the pectinesterase family. Pollen, and at much lower levels in pistils and petals.

It is found in the secreted. Its subcellular location is the cell wall. The enzyme catalyses [(1-&gt;4)-alpha-D-galacturonosyl methyl ester](n) + n H2O = [(1-&gt;4)-alpha-D-galacturonosyl](n) + n methanol + n H(+). Its pathway is glycan metabolism; pectin degradation; 2-dehydro-3-deoxy-D-gluconate from pectin: step 1/5. Functionally, may play a role in pollen germination and/or tube growth. This is Pectinesterase (PPE1) from Petunia integrifolia (Violet-flowered petunia).